An 84-amino-acid polypeptide reads, in one-letter code: Anthracycline acyl carrier protein DauA (84 aa).

The Carrier domain occupies 3 to 80 (ELSLAELREI…SMLIFVNERL (78 aa)). At Ser-40 the chain carries O-(pantetheine 4'-phosphoryl)serine.

It participates in antibiotic biosynthesis; daunorubicin biosynthesis. It functions in the pathway antibiotic biosynthesis; carminomycin biosynthesis. Its pathway is antibiotic biosynthesis; rhodomycin biosynthesis. The protein operates within antibiotic biosynthesis; aclacinomycin biosynthesis. Its function is as follows. Involved in the biosynthesis of aklanonate which is an important precursor common to the formation of the clinically significant anthracyclines such as carminomycin, daunorubicin (daunomycin), rhodomycin, aclacinomycin T (aklavin) and aclacinomycin A (aclarubicin). These compounds are aromatic polyketide antibiotics that exhibit high cytotoxicity and are widely applied in the chemotherapy of a variety of cancers. This is Anthracycline acyl carrier protein DauA (dauA) from Streptomyces sp. (strain C5).